The following is a 156-amino-acid chain: 3-hydroxyacyl-[acyl-carrier-protein] dehydratase FabZ (156 aa).

Histidine 61 is a catalytic residue.

It belongs to the thioester dehydratase family. FabZ subfamily.

It localises to the cytoplasm. The enzyme catalyses a (3R)-hydroxyacyl-[ACP] = a (2E)-enoyl-[ACP] + H2O. In terms of biological role, involved in unsaturated fatty acids biosynthesis. Catalyzes the dehydration of short chain beta-hydroxyacyl-ACPs and long chain saturated and unsaturated beta-hydroxyacyl-ACPs. The protein is 3-hydroxyacyl-[acyl-carrier-protein] dehydratase FabZ of Acaryochloris marina (strain MBIC 11017).